The following is a 442-amino-acid chain: 3-phosphoshikimate 1-carboxyvinyltransferase (442 aa).

3-phosphoshikimate is bound by residues Lys-23, Ser-24, and Arg-28. Lys-23 is a phosphoenolpyruvate binding site. Phosphoenolpyruvate contacts are provided by Gly-95 and Arg-123. 4 residues coordinate 3-phosphoshikimate: Ser-167, Gln-169, Asp-315, and Lys-342. Gln-169 is a binding site for phosphoenolpyruvate. Asp-315 serves as the catalytic Proton acceptor. Residues Arg-346 and Arg-390 each contribute to the phosphoenolpyruvate site.

It belongs to the EPSP synthase family. Monomer.

It localises to the cytoplasm. It catalyses the reaction 3-phosphoshikimate + phosphoenolpyruvate = 5-O-(1-carboxyvinyl)-3-phosphoshikimate + phosphate. Its pathway is metabolic intermediate biosynthesis; chorismate biosynthesis; chorismate from D-erythrose 4-phosphate and phosphoenolpyruvate: step 6/7. In terms of biological role, catalyzes the transfer of the enolpyruvyl moiety of phosphoenolpyruvate (PEP) to the 5-hydroxyl of shikimate-3-phosphate (S3P) to produce enolpyruvyl shikimate-3-phosphate and inorganic phosphate. The chain is 3-phosphoshikimate 1-carboxyvinyltransferase from Dichelobacter nodosus (strain VCS1703A).